A 488-amino-acid polypeptide reads, in one-letter code: MRHLLLLFLCPCAIGVAFHLWLFNFSGLFTWFPVWSQRSYDIVVGVLSARHNHELRNVIRHTWLQHLKQHSSLSQRILVKFIIGSHGCDIPVEDREDPYSCKLLNITNPTFKQEIESFSIPDIAALLTEHHVVNVNFRVLYPVVITRLGVFQHDSAAGFHRNITVKLFQTEHEEALFSARFSPASSGVQVNGIWYKPVEQFILPEGFEGTVVWESHDPEGLLSGNVHRVIVNDGGGIFRITTVKEGLLPYEFTEGVEGIAGGFTYTIHEGEALLNTLETRPERIQIHLAALEKEDALLQEESTTFQDIVFVHVVDTYRNVPSKLLNFYQWTAEFTSFEFLLKTDDDCFIDIENVLEKIAHKQLQKENTWWGNFRLNWAVDRTGKWQELEYLSPAYPAFACGSGYVISQDIVQWLASNSQRLKTYQGEDVSMGIWMSAIGPSRYQDSHWLCEKKCEAGMLSSPQYTPQELLELWQQKERCGNPCACEDR.

At 1-2 (MR) the chain is on the cytoplasmic side. The chain crosses the membrane as a helical; Signal-anchor for type II membrane protein span at residues 3 to 23 (HLLLLFLCPCAIGVAFHLWLF). N-linked (GlcNAc...) asparagine glycans are attached at residues Asn-24, Asn-105, and Asn-162. The Lumenal portion of the chain corresponds to 24–488 (NFSGLFTWFP…CGNPCACEDR (465 aa)).

The protein belongs to the glycosyltransferase 31 family.

It is found in the golgi apparatus membrane. The protein resides in the endoplasmic reticulum. It carries out the reaction 3-O-(N-acetyl-beta-D-glucosaminyl-(1-&gt;4)-alpha-D-mannosyl)-L-threonyl-[protein] + UDP-N-acetyl-alpha-D-galactosamine = 3-O-[beta-D-GalNAc-(1-&gt;3)-beta-D-GlcNAc-(1-&gt;4)-alpha-D-Man]-L-Thr-[protein] + UDP + H(+). It functions in the pathway protein modification; protein glycosylation. Its function is as follows. Beta-1,3-N-acetylgalactosaminyltransferase that synthesizes a unique carbohydrate structure, GalNAc-beta-1-3GlcNAc, on N- and O-glycans. Has no galactose nor galactosaminyl transferase activity toward any acceptor substrate. Involved in alpha-dystroglycan (dag1) glycosylation. In Xenopus tropicalis (Western clawed frog), this protein is UDP-GalNAc:beta-1,3-N-acetylgalactosaminyltransferase 2 (b3galnt2).